The sequence spans 521 residues: MSLLREAEKCLANQKTYASLNAFITPLQRAGPWRDRVRDSDTRRERGVTKSPLDGKLVAIKDNICTRDMPTTCASRILDTYTSPFNATVVESLEKSGAIIAGKTNLDEFGMGSHSMHSHFGPVKNVTESRREPISPGGSSGGSAVAVATGQCYAALGTDTGGSVRLPAAYTGTVGFKPSYGHVSRWGVVAYANSLDTVGVLGSSISTIREVYKTINHPDLHDPTNLPPATRTRLTAAVHNSSTTRSSPSPYLRIGIPTEYNIHELSPTVRTAWQRSIVHLQRMGHTILPVSLPATKHALAAYYVLAPAEASSNLARYDGVRYGTRDTDAPDDAEPGGYLYASSRGKGLGSEVKRRILLGAFSLSADAIDNYFLQAQRVRRLVQADFERVFRVKNPLLPAVDVDADVDGRDKKQIAGDNAGVDVLVVPTAPTLPPTVESLKRASTVETYMNDIFTVPASLAGLPALSVPVQMRGLSTVGDGDESKGDGADAAFGSVGIQAIGQFGDDEMVLHVGEMLEGMHG.

Active-site charge relay system residues include lysine 61 and serine 139. Serine 163 (acyl-ester intermediate) is an active-site residue.

It belongs to the amidase family. GatA subfamily. As to quaternary structure, subunit of the heterotrimeric GatCAB amidotransferase (AdT) complex, composed of A, B and C subunits.

Its subcellular location is the mitochondrion. The enzyme catalyses L-glutamyl-tRNA(Gln) + L-glutamine + ATP + H2O = L-glutaminyl-tRNA(Gln) + L-glutamate + ADP + phosphate + H(+). Its function is as follows. Allows the formation of correctly charged Gln-tRNA(Gln) through the transamidation of misacylated Glu-tRNA(Gln) in the mitochondria. The reaction takes place in the presence of glutamine and ATP through an activated gamma-phospho-Glu-tRNA(Gln). This Ajellomyces capsulatus (strain G186AR / H82 / ATCC MYA-2454 / RMSCC 2432) (Darling's disease fungus) protein is Glutamyl-tRNA(Gln) amidotransferase subunit A, mitochondrial.